We begin with the raw amino-acid sequence, 419 residues long: Gamma-glutamyl phosphate reductase (419 aa).

Belongs to the gamma-glutamyl phosphate reductase family.

The protein localises to the cytoplasm. It carries out the reaction L-glutamate 5-semialdehyde + phosphate + NADP(+) = L-glutamyl 5-phosphate + NADPH + H(+). It participates in amino-acid biosynthesis; L-proline biosynthesis; L-glutamate 5-semialdehyde from L-glutamate: step 2/2. Catalyzes the NADPH-dependent reduction of L-glutamate 5-phosphate into L-glutamate 5-semialdehyde and phosphate. The product spontaneously undergoes cyclization to form 1-pyrroline-5-carboxylate. The chain is Gamma-glutamyl phosphate reductase from Caldicellulosiruptor saccharolyticus (strain ATCC 43494 / DSM 8903 / Tp8T 6331).